Consider the following 186-residue polypeptide: Ribosome-recycling factor (186 aa).

The protein belongs to the RRF family.

Its subcellular location is the cytoplasm. Functionally, responsible for the release of ribosomes from messenger RNA at the termination of protein biosynthesis. May increase the efficiency of translation by recycling ribosomes from one round of translation to another. In Coprothermobacter proteolyticus (strain ATCC 35245 / DSM 5265 / OCM 4 / BT), this protein is Ribosome-recycling factor.